Consider the following 212-residue polypeptide: Transcription factor MYB8 (212 aa).

2 HTH myb-type domains span residues 9–61 (KAHM…INYL) and 62–116 (RPDL…KRKL). DNA-binding regions (H-T-H motif) lie at residues 37–61 (WRSLPKSVGLLRCGKSCRLRWINYL) and 89–112 (WSLIAGKLPGRTDNEIKNYWNTHI).

Its subcellular location is the nucleus. Functionally, transcription activator. This chain is Transcription factor MYB8, found in Arabidopsis thaliana (Mouse-ear cress).